We begin with the raw amino-acid sequence, 1133 residues long: Early transcription factor large subunit homolog (1133 aa).

Residues 52–352 (KGGRAFFPCD…PNGQPLQRQQ (301 aa)) enclose the Helicase ATP-binding domain. Position 99–106 (99–106 (WQTGTGKS)) interacts with ATP. A DEAH box motif is present at residues 281–284 (DEIH). Residues 524–724 (MMKDILSIIR…EGDKALRKHA (201 aa)) enclose the Helicase C-terminal domain.

Belongs to the DEAD box helicase family. DEAH subfamily.

The protein localises to the virion. The catalysed reaction is ATP + H2O = ADP + phosphate + H(+). Functionally, putative initation factor. This is Early transcription factor large subunit homolog from Ornithodoros (relapsing fever ticks).